We begin with the raw amino-acid sequence, 226 residues long: Leucyl/phenylalanyl-tRNA--protein transferase (226 aa).

Belongs to the L/F-transferase family.

It is found in the cytoplasm. The catalysed reaction is N-terminal L-lysyl-[protein] + L-leucyl-tRNA(Leu) = N-terminal L-leucyl-L-lysyl-[protein] + tRNA(Leu) + H(+). It carries out the reaction N-terminal L-arginyl-[protein] + L-leucyl-tRNA(Leu) = N-terminal L-leucyl-L-arginyl-[protein] + tRNA(Leu) + H(+). It catalyses the reaction L-phenylalanyl-tRNA(Phe) + an N-terminal L-alpha-aminoacyl-[protein] = an N-terminal L-phenylalanyl-L-alpha-aminoacyl-[protein] + tRNA(Phe). Functionally, functions in the N-end rule pathway of protein degradation where it conjugates Leu, Phe and, less efficiently, Met from aminoacyl-tRNAs to the N-termini of proteins containing an N-terminal arginine or lysine. This chain is Leucyl/phenylalanyl-tRNA--protein transferase, found in Pseudomonas fluorescens (strain ATCC BAA-477 / NRRL B-23932 / Pf-5).